Here is a 190-residue protein sequence, read N- to C-terminus: E3 ubiquitin-protein ligase RNF4 (190 aa).

The required for ubiquitination activity stretch occupies residues 1-16 (MSTRKRRGGAINSRQA). The segment at 1 to 29 (MSTRKRRGGAINSRQAQKRTREATSTPEI) is disordered. Residues 4–61 (RKRRGGAINSRQAQKRTREATSTPEISLEAEPIELVETAGDEIVDLTCESLEPVVVDL) form a mediates interaction with TRPS1 region. 4 consecutive short sequence motifs (SUMO interaction motif) follow at residues 36–39 (IELV), 46–49 (IVDL), 57–59 (VVV), and 67–70 (VVIV). Phosphoserine occurs at positions 94 and 95. Zn(2+) is bound by residues Cys-132, Cys-135, Cys-154, His-156, Cys-159, Cys-162, Cys-173, and Cys-176. An RING-type zinc finger spans residues 132 to 177 (CPICMDGYSEIVQNGRLIVSTECGHVFCSQCLRDSLKNANTCPTCR).

Homodimer (via RING-type zinc finger domain). Interacts with GSC2. Interacts with AR/the androgen receptor and TBP. Interacts with TCF20. Interacts with PATZ1. Interacts with TRPS1; negatively regulates TRPS1 transcriptional repressor activity. Interacts with PML (isoform PML-1, isoform PML-2, isoform PML-3, isoform PML-4, isoform PML-5 and isoform PML-6). Interacts with PRDM1/Blimp-1. Post-translationally, sumoylated; conjugated by one or two SUMO1 moieties. Autoubiquitinated. In terms of tissue distribution, widely expressed at low levels in many tissues; highly expressed in testis.

The protein resides in the cytoplasm. The protein localises to the nucleus. It localises to the PML body. The enzyme catalyses S-ubiquitinyl-[E2 ubiquitin-conjugating enzyme]-L-cysteine + [acceptor protein]-L-lysine = [E2 ubiquitin-conjugating enzyme]-L-cysteine + N(6)-ubiquitinyl-[acceptor protein]-L-lysine.. Its pathway is protein modification; protein ubiquitination. E3 ubiquitin-protein ligase which binds polysumoylated chains covalently attached to proteins and mediates 'Lys-6'-, 'Lys-11'-, 'Lys-48'- and 'Lys-63'-linked polyubiquitination of those substrates and their subsequent targeting to the proteasome for degradation. Regulates the degradation of several proteins including PML and the transcriptional activator PEA3. Involved in chromosome alignment and spindle assembly, it regulates the kinetochore CENPH-CENPI-CENPK complex by targeting polysumoylated CENPI to proteasomal degradation. Regulates the cellular responses to hypoxia and heat shock through degradation of respectively EPAS1 and PARP1. Alternatively, it may also bind DNA/nucleosomes and have a more direct role in the regulation of transcription for instance enhancing basal transcription and steroid receptor-mediated transcriptional activation. Catalyzes ubiquitination of sumoylated PARP1 in response to PARP1 trapping to chromatin, leading to PARP1 removal from chromatin by VCP/p97. The polypeptide is E3 ubiquitin-protein ligase RNF4 (Homo sapiens (Human)).